The chain runs to 232 residues: E3 ubiquitin-protein ligase RNF125 (232 aa).

The span at 1–10 shows a compositional bias: polar residues; sequence MGSVLSTDSG. A disordered region spans residues 1-23; it reads MGSVLSTDSGKSAPASATARALE. G2 carries N-myristoyl glycine lipidation. Zn(2+) is bound by residues C37 and C40. Residues 37–76 form an RING-type zinc finger; sequence CAVCLEVLHQPVRTRCGHVFCRSCIATSLKNNKWTCPYCR. The segment at 43–45 is interaction with the C2HC RNF-type zinc finger; sequence VLH. 8 residues coordinate Zn(2+): C52, H54, C57, C60, C72, C75, C100, and C103. The C2HC RNF-type zinc-finger motif lies at 100-119; it reads CAECDTLVCLSEMRAHIRTC. The interval 109 to 113 is interaction with the RING-type zinc finger; it reads LSEMR. Zn(2+) contacts are provided by H115 and C119. Positions 120 to 128 are linker region; that stretch reads QKYIDKYGP. The tract at residues 210–224 is required for interaction with ubiquitin and for autoubiquitination; the sequence is EEALIRRVLDRSLLE.

As to quaternary structure, interacts with UBE2D1. Interacts with VCP/p97; leading to recruit RNF125 to RIGI and promote ubiquitination of RIGI. Autoubiquitinated, leading to its subsequent proteasomal degradation. In terms of tissue distribution, predominantly expressed in lymphoid tissues, including bone marrow, spleen and thymus. Also weakly expressed in other tissues. Predominant in the CD4(+) and CD8(+) T-cells, suggesting that it is preferentially confined to T-cells.

It localises to the golgi apparatus membrane. The enzyme catalyses S-ubiquitinyl-[E2 ubiquitin-conjugating enzyme]-L-cysteine + [acceptor protein]-L-lysine = [E2 ubiquitin-conjugating enzyme]-L-cysteine + N(6)-ubiquitinyl-[acceptor protein]-L-lysine.. Its pathway is protein modification; protein ubiquitination. Functionally, E3 ubiquitin-protein ligase that mediates ubiquitination and subsequent proteasomal degradation of target proteins, such as RIGI, MAVS/IPS1, IFIH1/MDA5, JAK1 and p53/TP53. Acts as a negative regulator of type I interferon production by mediating ubiquitination of RIGI at 'Lys-181', leading to RIGI degradation. Mediates ubiquitination and subsequent degradation of p53/TP53. Mediates ubiquitination and subsequent degradation of JAK1. Acts as a positive regulator of T-cell activation. In Homo sapiens (Human), this protein is E3 ubiquitin-protein ligase RNF125.